Here is a 125-residue protein sequence, read N- to C-terminus: Methylglyoxal synthase (125 aa).

The MGS-like domain maps to 1-125 (MTERLRIALI…TAEKLIKALD (125 aa)). Substrate is bound by residues H12, K16, 38–41 (TGTT), and 59–60 (SG). D65 (proton donor/acceptor) is an active-site residue. H92 is a binding site for substrate.

This sequence belongs to the methylglyoxal synthase family.

The enzyme catalyses dihydroxyacetone phosphate = methylglyoxal + phosphate. Catalyzes the formation of methylglyoxal from dihydroxyacetone phosphate. The chain is Methylglyoxal synthase from Brucella anthropi (strain ATCC 49188 / DSM 6882 / CCUG 24695 / JCM 21032 / LMG 3331 / NBRC 15819 / NCTC 12168 / Alc 37) (Ochrobactrum anthropi).